The chain runs to 854 residues: N-terminal acetyltransferase A complex subunit NAT1 (854 aa).

At S2 the chain carries N-acetylserine. 7 TPR repeats span residues 20-53 (ENDQ…DGSH), 54-87 (VDSL…IEGA), 91-124 (PICC…GSTN), 126-162 (QIYR…RANW), 241-274 (FGLL…NPDN), 384-417 (IWTN…TPTL), and 452-485 (RFIN…DDSV). Residues 623-667 (LKRKSDSLDENSDEIQNNGQNSSSQKKKAKKEAAAMNKRKETEAK) adopt a coiled-coil conformation. Positions 626–668 (KSDSLDENSDEIQNNGQNSSSQKKKAKKEAAAMNKRKETEAKS) are disordered. Position 674 is a phosphoserine (S674). Residues 728-761 (ALCFASLNKFAKRFGTTSGLFGSMAIVLLHATRN) form a TPR 8 repeat.

In terms of assembly, component of the N-terminal acetyltransferase A (NatA) complex, which is composed of ARD1, NAT1 and NAT5. Can self-associate. NAT1 associates with the nascent polypeptide chain and the ribosome. The N-terminus is blocked.

Its subcellular location is the cytoplasm. Its function is as follows. Non-catalytic component of the NatA N-terminal acetyltransferase, which catalyzes acetylation of proteins beginning with Met-Ser, Met-Gly and Met-Ala. N-acetylation plays a role in normal eukaryotic translation and processing, protect against proteolytic degradation and protein turnover. NAT1 anchors ARD1 and NAT5 to the ribosome and may present the N termini of nascent polypeptides for acetylation. In Saccharomyces cerevisiae (strain ATCC 204508 / S288c) (Baker's yeast), this protein is N-terminal acetyltransferase A complex subunit NAT1 (NAT1).